A 419-amino-acid chain; its full sequence is Histidine--tRNA ligase (419 aa).

It belongs to the class-II aminoacyl-tRNA synthetase family. In terms of assembly, homodimer.

It is found in the cytoplasm. It carries out the reaction tRNA(His) + L-histidine + ATP = L-histidyl-tRNA(His) + AMP + diphosphate + H(+). The sequence is that of Histidine--tRNA ligase from Caldicellulosiruptor saccharolyticus (strain ATCC 43494 / DSM 8903 / Tp8T 6331).